The primary structure comprises 90 residues: Small ribosomal subunit protein bS18 (90 aa).

The protein belongs to the bacterial ribosomal protein bS18 family. Part of the 30S ribosomal subunit. Forms a tight heterodimer with protein bS6.

Binds as a heterodimer with protein bS6 to the central domain of the 16S rRNA, where it helps stabilize the platform of the 30S subunit. The polypeptide is Small ribosomal subunit protein bS18 (Porphyromonas gingivalis (strain ATCC 33277 / DSM 20709 / CIP 103683 / JCM 12257 / NCTC 11834 / 2561)).